A 965-amino-acid polypeptide reads, in one-letter code: Kinesin-like protein KIN-7K, chloroplastic (965 aa).

Residues 1-69 (MASRQGSKSR…PQTAQRSKEN (69 aa)) form a disordered region. Positions 19–28 (STASSTTSSS) are enriched in low complexity. The segment covering 29–38 (KLYQETSIDG) has biased composition (polar residues). Residues 40-56 (SSPASSSAQSKQQFFSP) show a composition bias toward low complexity. The 320-residue stretch at 69–388 (NVTVTVRFRP…LKFAHRAKHI (320 aa)) folds into the Kinesin motor domain. An ATP-binding site is contributed by 149 to 156 (GVTSSGKT). Residues 389 to 483 (EIQAEQNKII…LTKLILVSTK (95 aa)) adopt a coiled-coil conformation. The segment covering 551 to 561 (LLNWLKPKKRD) has biased composition (basic residues). 2 disordered regions span residues 551–633 (LLNW…KMSD) and 842–888 (ATQK…ELRM). The span at 564–577 (SSASDQSSVVKSNS) shows a compositional bias: low complexity. Residues 606 to 623 (SEPREDREALEDSSHEME) are compositionally biased toward basic and acidic residues. Coiled-coil stretches lie at residues 628 to 703 (SNKM…FVMT) and 738 to 846 (NRII…TQKS). Over residues 851-862 (RNKTGTTTNVRN) the composition is skewed to low complexity. Residues 864–888 (GRRESLAKRQEHDSPSMELKRELRM) are compositionally biased toward basic and acidic residues. A coiled-coil region spans residues 896 to 931 (YEAALGEKEQREAELERILEETKQREAYLENELANM). A disordered region spans residues 942 to 965 (QGADSEISDSISETRQTEQTEGSF). The segment covering 949 to 965 (SDSISETRQTEQTEGSF) has biased composition (polar residues).

This sequence belongs to the TRAFAC class myosin-kinesin ATPase superfamily. Kinesin family. KIN-7 subfamily.

The protein localises to the plastid. It is found in the chloroplast. The sequence is that of Kinesin-like protein KIN-7K, chloroplastic from Arabidopsis thaliana (Mouse-ear cress).